The following is a 323-amino-acid chain: Cytochrome c biogenesis protein CcsA (323 aa).

The next 8 helical transmembrane spans lie at 9–29 (ILTH…LITL), 37–57 (LYVS…GLLV), 71–91 (LYES…FTYF), 100–120 (VSAI…SGFL), 145–165 (MVLG…LIVI), 227–247 (IISL…VWAN), 261–275 (TWAF…IYLH), and 288–308 (AIVA…VNLL).

The protein belongs to the CcmF/CycK/Ccl1/NrfE/CcsA family. As to quaternary structure, may interact with Ccs1.

It localises to the plastid. The protein localises to the chloroplast thylakoid membrane. In terms of biological role, required during biogenesis of c-type cytochromes (cytochrome c6 and cytochrome f) at the step of heme attachment. The polypeptide is Cytochrome c biogenesis protein CcsA (Cucumis sativus (Cucumber)).